The following is a 153-amino-acid chain: Partner of bursicon (153 aa).

The first 35 residues, 1-35 (MCNSVRTALAASNCCSIVLCCVLLLTLTLTVAVTA), serve as a signal peptide directing secretion. 5 cysteine pairs are disulfide-bonded: cysteine 44/cysteine 102, cysteine 68/cysteine 117, cysteine 77/cysteine 143, cysteine 81/cysteine 145, and cysteine 99/cysteine 148. Residues 44–139 (CETLPSEIHL…SATMEIRLKE (96 aa)) enclose the CTCK domain.

As to quaternary structure, heterodimer of burs and pburs.

The protein resides in the secreted. In terms of biological role, final heterodimeric neurohormone released at the end of the molting cycle, involved in the sclerotization (tanning) of the insect cuticle, melanization and wing spreading. The polypeptide is Partner of bursicon (Anopheles gambiae (African malaria mosquito)).